A 235-amino-acid chain; its full sequence is Urease accessory protein UreF (235 aa).

It belongs to the UreF family. In terms of assembly, ureD, UreF and UreG form a complex that acts as a GTP-hydrolysis-dependent molecular chaperone, activating the urease apoprotein by helping to assemble the nickel containing metallocenter of UreC. The UreE protein probably delivers the nickel.

It is found in the cytoplasm. Required for maturation of urease via the functional incorporation of the urease nickel metallocenter. The chain is Urease accessory protein UreF from Ureaplasma urealyticum serovar 10 (strain ATCC 33699 / Western).